Here is a 231-residue protein sequence, read N- to C-terminus: Uracil phosphoribosyltransferase (231 aa).

A GTP-binding site is contributed by 38-42 (KGLVR). 5-phospho-alpha-D-ribose 1-diphosphate is bound by residues arginine 87, arginine 112, and 140 to 148 (DPMIATGST). Uracil-binding positions include isoleucine 203 and 208 to 210 (GDA). 5-phospho-alpha-D-ribose 1-diphosphate is bound at residue aspartate 209.

The protein belongs to the UPRTase family. It depends on Mg(2+) as a cofactor.

The enzyme catalyses UMP + diphosphate = 5-phospho-alpha-D-ribose 1-diphosphate + uracil. It functions in the pathway pyrimidine metabolism; UMP biosynthesis via salvage pathway; UMP from uracil: step 1/1. Allosterically activated by GTP. Functionally, catalyzes the conversion of uracil and 5-phospho-alpha-D-ribose 1-diphosphate (PRPP) to UMP and diphosphate. The polypeptide is Uracil phosphoribosyltransferase (Methanococcus maripaludis (strain C5 / ATCC BAA-1333)).